The following is a 634-amino-acid chain: Sodium-dependent neutral amino acid transporter B(0)AT1 (634 aa).

Over 1-41 (MVRLVLPNPGLDTRILSLAELETIEQEEASSRPKWDNKAQY) the chain is Cytoplasmic. Ser-17 carries the phosphoserine modification. A helical transmembrane segment spans residues 42-62 (LLTCVGFCVGLGNVWRFPYLC). Topologically, residues 63 to 65 (QSH) are extracellular. A helical membrane pass occupies residues 66–86 (GGGAFMIPFLILLVLEGIPLL). At 87-120 (HLEFAIGQRLRRGSLGVWSSIHPALKGVGLTSML) the chain is on the cytoplasmic side. Residues 121–141 (VSFVVGLYYNTIISWIMWYLF) traverse the membrane as a helical segment. Over 142–192 (NSFQEPLPWSECPLNENQTGYVDECARSSPVDYFWYRETLNISTSISDSGS) the chain is Extracellular. Residues Asn-158 and Asn-182 are each glycosylated (N-linked (GlcNAc...) asparagine). The helical transmembrane segment at 193–213 (IQWRMLLCLACAWSVLYMCTI) threads the bilayer. The Cytoplasmic portion of the chain corresponds to 214-221 (RGIETTGK). Residues 222–242 (VVYITSTLPYVVLTIFLIRGL) traverse the membrane as a helical segment. The Extracellular segment spans residues 243–268 (TLKGATKGIIYLFTPNVTELANPVTW). N-linked (GlcNAc...) asparagine glycosylation occurs at Asn-258. A helical membrane pass occupies residues 269 to 289 (LDAGAQVFFSFSLAFGGLISF). Residues 290-304 (SSYNSVHNNCERDSV) lie on the Cytoplasmic side of the membrane. The chain crosses the membrane as a helical span at residues 305–325 (IVSIINGFTSVYVAIVIYSII). At 326–413 (GFRATQRYDD…TEAITKMPVS (88 aa)) the chain is on the extracellular side. Residues Asn-354 and Asn-368 are each glycosylated (N-linked (GlcNAc...) asparagine). A helical membrane pass occupies residues 414–434 (PLWSVLFFIMLFCLGLSSMFG). Residues 435–456 (NMEGVVVPLQDLKVIPPKWPKE) lie on the Cytoplasmic side of the membrane. A helical membrane pass occupies residues 457–477 (LLTGLICLGTFLIGFIFTLNS). Residues 478–487 (GQYWLSLLDS) lie on the Extracellular side of the membrane. A helical transmembrane segment spans residues 488–508 (YAVSIPLLIIAFCEMFSVVYV). Residues 509–531 (YGVDRFNKDIEFMIGHKPNIFWQ) lie on the Cytoplasmic side of the membrane. A helical membrane pass occupies residues 532–552 (VTWRVVSPLLMLIILVFFFVV). The Extracellular portion of the chain corresponds to 553-581 (QVSQELTYSIWNPGYEEFPKSQKISHPNW). The helical transmembrane segment at 582 to 602 (VYAVVVIVAGVPSLTIPSYAI) threads the bilayer. At 603–634 (YKLIRNCCQKPGDRQGLVSTLSTASMNGDLKY) the chain is on the cytoplasmic side. Residue Ser-627 is modified to Phosphoserine.

This sequence belongs to the sodium:neurotransmitter symporter (SNF) (TC 2.A.22) family. SLC6A19 subfamily. As to quaternary structure, interacts in a tissue-specific manner with ACE2 in small intestine and with CLTRN in the kidney. Interacts with CLTRN; this interaction is required for trafficking of SLC6A19 to the plasma membrane and for its catalytic activation in kidneys. Interacts with ACE2; this interaction is required for trafficking of SLC6A19 to the plasma membrane and for its catalytic activation in intestine. Interacts with ANPEP; the interaction positively regulates its amino acid transporter activity.

The protein resides in the membrane. The enzyme catalyses L-alanine(in) + Na(+)(in) = L-alanine(out) + Na(+)(out). It catalyses the reaction L-cysteine(in) + Na(+)(in) = L-cysteine(out) + Na(+)(out). The catalysed reaction is L-glutamine(in) + Na(+)(in) = L-glutamine(out) + Na(+)(out). It carries out the reaction glycine(in) + Na(+)(in) = glycine(out) + Na(+)(out). The enzyme catalyses L-isoleucine(in) + Na(+)(in) = L-isoleucine(out) + Na(+)(out). It catalyses the reaction L-leucine(in) + Na(+)(in) = L-leucine(out) + Na(+)(out). The catalysed reaction is L-methionine(in) + Na(+)(in) = L-methionine(out) + Na(+)(out). It carries out the reaction L-phenylalanine(in) + Na(+)(in) = L-phenylalanine(out) + Na(+)(out). The enzyme catalyses L-serine(in) + Na(+)(in) = L-serine(out) + Na(+)(out). It catalyses the reaction L-tryptophan(in) + Na(+)(in) = L-tryptophan(out) + Na(+)(out). The catalysed reaction is L-tyrosine(in) + Na(+)(in) = L-tyrosine(out) + Na(+)(out). It carries out the reaction L-valine(in) + Na(+)(in) = L-valine(out) + Na(+)(out). Transporter that mediates resorption of neutral amino acids across the apical membrane of renal and intestinal epithelial cells. This uptake is sodium-dependent and chloride-independent. Requires CLTRN in kidney or ACE2 in intestine for cell surface expression and amino acid transporter activity. The chain is Sodium-dependent neutral amino acid transporter B(0)AT1 (SLC6A19) from Pongo abelii (Sumatran orangutan).